The following is a 301-amino-acid chain: Homoserine O-acetyltransferase (301 aa).

Residue C142 is the Acyl-thioester intermediate of the active site. The substrate site is built by K163 and S192. The active-site Proton acceptor is the H235. E237 is a catalytic residue. R249 serves as a coordination point for substrate.

This sequence belongs to the MetA family.

The protein resides in the cytoplasm. It catalyses the reaction L-homoserine + acetyl-CoA = O-acetyl-L-homoserine + CoA. Its pathway is amino-acid biosynthesis; L-methionine biosynthesis via de novo pathway; O-acetyl-L-homoserine from L-homoserine: step 1/1. Functionally, transfers an acetyl group from acetyl-CoA to L-homoserine, forming acetyl-L-homoserine. This Bacillus cytotoxicus (strain DSM 22905 / CIP 110041 / 391-98 / NVH 391-98) protein is Homoserine O-acetyltransferase.